The primary structure comprises 501 residues: Cytochrome P450 2J5 (501 aa).

A heme-binding site is contributed by cysteine 447.

It belongs to the cytochrome P450 family. The cofactor is heme.

The protein resides in the endoplasmic reticulum membrane. It localises to the microsome membrane. It catalyses the reaction an organic molecule + reduced [NADPH--hemoprotein reductase] + O2 = an alcohol + oxidized [NADPH--hemoprotein reductase] + H2O + H(+). The polypeptide is Cytochrome P450 2J5 (Cyp2j5) (Mus musculus (Mouse)).